The chain runs to 338 residues: Ketol-acid reductoisomerase (NADP(+)) (338 aa).

A KARI N-terminal Rossmann domain is found at 1–181; it reads MKVFYDKDCD…GGGKAGIIET (181 aa). Residues 24–27, Arg47, and Ser52 each bind NADP(+); that span reads YGSQ. His107 is a catalytic residue. Residue Gly133 coordinates NADP(+). In terms of domain architecture, KARI C-terminal knotted spans 182–327; it reads NFREETETDL…GKLRAMMPWI (146 aa). Mg(2+) is bound by residues Asp190, Glu194, Glu226, and Glu230. Ser251 serves as a coordination point for substrate.

The protein belongs to the ketol-acid reductoisomerase family. The cofactor is Mg(2+).

The enzyme catalyses (2R)-2,3-dihydroxy-3-methylbutanoate + NADP(+) = (2S)-2-acetolactate + NADPH + H(+). It carries out the reaction (2R,3R)-2,3-dihydroxy-3-methylpentanoate + NADP(+) = (S)-2-ethyl-2-hydroxy-3-oxobutanoate + NADPH + H(+). It participates in amino-acid biosynthesis; L-isoleucine biosynthesis; L-isoleucine from 2-oxobutanoate: step 2/4. It functions in the pathway amino-acid biosynthesis; L-valine biosynthesis; L-valine from pyruvate: step 2/4. Involved in the biosynthesis of branched-chain amino acids (BCAA). Catalyzes an alkyl-migration followed by a ketol-acid reduction of (S)-2-acetolactate (S2AL) to yield (R)-2,3-dihydroxy-isovalerate. In the isomerase reaction, S2AL is rearranged via a Mg-dependent methyl migration to produce 3-hydroxy-3-methyl-2-ketobutyrate (HMKB). In the reductase reaction, this 2-ketoacid undergoes a metal-dependent reduction by NADPH to yield (R)-2,3-dihydroxy-isovalerate. In Polaromonas naphthalenivorans (strain CJ2), this protein is Ketol-acid reductoisomerase (NADP(+)).